Reading from the N-terminus, the 471-residue chain is Type 2 glycosyltransferase (471 aa).

Residues 4 to 24 form a helical membrane-spanning segment; sequence ILGWFWAFVSAFVLRYLRTIV. 3 N-linked (GlcNAc...) asparagine glycosylation sites follow: N29, N88, and N222. A run of 3 helical transmembrane segments spans residues 305-325, 339-359, and 368-388; these read CLQT…FYSL, MAFT…KLWG, and VIYI…KFWG. Residue N458 is glycosylated (N-linked (GlcNAc...) asparagine).

The protein belongs to the GT2 glycosyltransferase family.

Its subcellular location is the cell membrane. Glycosyltransferase involved in the maintenance of the outermost surface of the fungal cell wall. Likely functions in the synthesis of a currently unknown, potentially minor but widespread, extracellular or outer cell wall polysaccharide which plays a key role in facilitating many interactions between plants and fungi by enabling hyphal growth on solid matrices. The sequence is that of Type 2 glycosyltransferase from Zymoseptoria tritici (strain CBS 115943 / IPO323) (Speckled leaf blotch fungus).